Consider the following 546-residue polypeptide: uncharacterized protein (546 aa).

3 disordered regions span residues 37-101 (KEND…NQKL), 269-300 (QNKA…QPEV), and 392-443 (LSDL…TSAC). Basic and acidic residues-rich tracts occupy residues 81–93 (DDVK…ENNQ) and 274–283 (ADLRKTESHG). Residues 284–298 (THSQSTPPQHSSSQP) show a composition bias toward low complexity.

This is an uncharacterized protein from Homo sapiens (Human).